The following is a 25-amino-acid chain: Nicotinic acetylcholine receptor-binding protein Mnn-4 (25 aa).

The cysteines at positions 3 and 20 are disulfide-linked.

It belongs to the three-finger toxin family. Short-chain subfamily. Expressed by the venom gland.

The protein resides in the secreted. In terms of biological role, binds and may inhibit nicotinic acetylcholine receptors (nAChR). This is Nicotinic acetylcholine receptor-binding protein Mnn-4 from Micrurus nigrocinctus (Central American coral snake).